Consider the following 261-residue polypeptide: Small ribosomal subunit protein eS1 (261 aa).

The span at 1-18 (MAVGKNKRISKGKKGGKK) shows a compositional bias: basic residues. The segment at 1-20 (MAVGKNKRISKGKKGGKKKA) is disordered.

Belongs to the eukaryotic ribosomal protein eS1 family. Component of the small ribosomal subunit. Mature ribosomes consist of a small (40S) and a large (60S) subunit. The 40S subunit contains about 33 different proteins and 1 molecule of RNA (18S). The 60S subunit contains about 49 different proteins and 3 molecules of RNA (25S, 5.8S and 5S).

The protein localises to the cytoplasm. This is Small ribosomal subunit protein eS1 from Catharanthus roseus (Madagascar periwinkle).